The chain runs to 58 residues: Apelin receptor early endogenous ligand (58 aa).

The first 22 residues, 1–22 (MRFFHPLYLLLLLLTVLVLISA), serve as a signal peptide directing secretion.

Belongs to the Elabela/Toddler family. Interacts with aplnra and aplnrb. Expressed ubiquitously during late blastula and gastrula stages and becomes restricted to the lateral mesoderm, endoderm, and anterior and posterior notochord after gastrulation.

The protein resides in the secreted. It is found in the extracellular space. Functionally, peptide hormone that functions as endogenous ligand for the G-protein-coupled apelin receptor (aplnra and/or aplnrb), that plays a role in the regulation of normal cardiovascular function and fluid homeostasis. Functions as a balanced agonist activating both G(i) protein pathway and beta-arrestin pathway of APLNR. Downstream G proteins activation, apelin can inhibit cAMP production and activate key intracellular effectors such as ERKs. On the other hand, APLNR activation induces beta-arrestin recruitment to the membrane leading to desensitization and internalization of the receptor. Required for mesendodermal differentiation, blood vessels formation and heart morphogenesis during early development and for adult cardiovascular homeostasis. Acts as a motogen by promoting mesendodermal cell migration during gastrulation by binding and activating the apelin receptor. Acts as an early embryonic regulator of cellular movement with a role in migration and development of cardiac progenitor cells. May act as a chemoattractant for the activation of angioblast migration toward the embryonic midline, i.e. the position of the future vessel formation, during vasculogenesis. Positively regulates sinus venosus (SV)-derived endothelial cells migration into the developing heart to promote coronary blood vessel sprouting. Involved in cardioprotective functions during heart failure. Mediates myocardial contractility in an ERK1/2-dependent manner. In Danio rerio (Zebrafish), this protein is Apelin receptor early endogenous ligand.